Reading from the N-terminus, the 538-residue chain is [Pyruvate dehydrogenase [acetyl-transferring]]-phosphatase 1, mitochondrial (538 aa).

The N-terminal 71 residues, 1–71, are a transit peptide targeting the mitochondrion; it reads MPAPTQLFFP…WWQYTQGRRY (71 aa). Residues 109–525 form the PPM-type phosphatase domain; it reads VLGFDSNQLP…DDITIIVVQF (417 aa). 2 residues coordinate Mn(2+): Asp-144 and Gly-145. At Lys-202 the chain carries N6-acetyllysine. Mn(2+)-binding residues include Asp-418 and Asp-516.

Belongs to the PP2C family. Heterodimer of a catalytic (PDP1) and a regulatory (PDPR) subunit. Mn(2+) serves as cofactor. Requires Mg(2+) as cofactor.

The protein resides in the mitochondrion. The catalysed reaction is O-phospho-L-seryl-[pyruvate dehydrogenase E1 alpha subunit] + H2O = L-seryl-[pyruvate dehydrogenase E1 alpha subunit] + phosphate. Its activity is regulated as follows. Magnesium-dependent and calcium-stimulated. PDP1 activity strongly depends on its Ca(2+)-dependent binding to the lipoyl domain of E2 subunit of component of the pyruvate dehydrogenase complex. In terms of biological role, mitochondrial enzyme that catalyzes the dephosphorylation and concomitant reactivation of the alpha subunit of the E1 component of the pyruvate dehydrogenase complex (PDC), thereby stimulating the conversion of pyruvate into acetyl-CoA. In Bos taurus (Bovine), this protein is [Pyruvate dehydrogenase [acetyl-transferring]]-phosphatase 1, mitochondrial (PDP1).